A 100-amino-acid chain; its full sequence is Integration host factor subunit beta (100 aa).

A disordered region spans residues 81–100 (KPGKELRDRVNEDEHEEAHT). Over residues 82–100 (PGKELRDRVNEDEHEEAHT) the composition is skewed to basic and acidic residues.

Belongs to the bacterial histone-like protein family. As to quaternary structure, heterodimer of an alpha and a beta chain.

This protein is one of the two subunits of integration host factor, a specific DNA-binding protein that functions in genetic recombination as well as in transcriptional and translational control. The chain is Integration host factor subunit beta (ihfB) from Pseudomonas putida (Arthrobacter siderocapsulatus).